The sequence spans 147 residues: MVHLSGDEKNAVHGLWSKVKVDEVGGEALGRLLVVYPWTRRFFESFGDLSTADAVMNNPKVKAHGSKVLNSFGDGLNHLDNLKGTYAKLSELHCDKLHVDPENFRLLGNVLVVVLARHFGKEFTPDLQAAYQKVVAGVANALAHRYH.

At Val-2 the chain carries N-acetylvaline. Residues 3 to 147 form the Globin domain; sequence HLSGDEKNAV…VANALAHRYH (145 aa). The residue at position 45 (Ser-45) is a Phosphoserine. Lys-60 is modified (N6-acetyllysine). Residue His-64 participates in heme b binding. N6-acetyllysine is present on Lys-83. His-93 is a binding site for heme b. Cys-94 bears the S-nitrosocysteine mark.

It belongs to the globin family. Heterotetramer of two alpha chains and two beta chains. In terms of tissue distribution, red blood cells.

Functionally, involved in oxygen transport from the lung to the various peripheral tissues. This chain is Hemoglobin subunit beta (HBB), found in Camelus dromedarius (Dromedary).